Here is a 452-residue protein sequence, read N- to C-terminus: Gamma conglutin 1 (452 aa).

The N-terminal stretch at methionine 1–leucine 33 is a signal peptide. The Peptidase A1 domain occupies histidine 61 to asparagine 432. Disulfide bonds link cysteine 89-cysteine 179, cysteine 103-cysteine 116, cysteine 108-cysteine 134, cysteine 119-cysteine 129, and cysteine 353-cysteine 394. N-linked (GlcNAc...) asparagine glycosylation is present at asparagine 131.

Belongs to the peptidase A1 family. As to quaternary structure, two-subunit monomeric unit made of alpha and beta subunits coupled by disulfide bonds (at pH 4.5 and under non-reducing conditions). Monomeric alpha and beta subunits in reducing conditions. Can also form oligomers including dimer, tetramer and cyclic hexamer (trimer of dimers) (at pH &gt; 5.5). Component of globulins complexes which accumulate in seeds. Interacts with flavonoids (e.g. apigenin glucosides) present in globulins complexes. Post-translationally, glycosylated on alpha chain at Asn-131; identified N-glycans bound are Man(2)(Xyl)(Fuc)GlcNAc(2), Man(3)(Xyl)(Fuc)GlcNAc(2), GlcNAcMan(3)(Xyl)(Fuc)GlcNAc(2) and GlcNAc(2)Man(3)(Xyl)(Fuc)GlcNAc(2). In terms of tissue distribution, expressed in developing seeds and in the young roots and cotyledons of germinating seeds and young seedlings.

It is found in the secreted. The protein localises to the extracellular space. Its function is as follows. Sulfur-rich seed storage protein that remains undegraded at germination. The uncleaved form exhibits some inhibitory activity against GH11 xylanase from T.longibrachiatum, more at pH 7 than at pH 5.3, but not against GH12 xyloglucan-specific endoglucanase (XEG) from A.aculeatus. Binds to model phospholipid membranes containing dimyristoyl phosphatidylglycerol (DMPG), dioleoyl phosphatidic acid (DOPA) or mixture of dimyristoyl phosphatidylcholine and dimyristoyl phosphatidylglycerol (DMPC:DMPG), or mixture of dioleoyl phosphatidic acid and dioleoyl phosphatidylcholine (DOPC:DOPA). This chain is Gamma conglutin 1, found in Lupinus albus (White lupine).